We begin with the raw amino-acid sequence, 269 residues long: 5'-nucleotidase SurE (269 aa).

4 residues coordinate a divalent metal cation: D11, D12, S43, and N101.

This sequence belongs to the SurE nucleotidase family. A divalent metal cation serves as cofactor.

It localises to the cytoplasm. It catalyses the reaction a ribonucleoside 5'-phosphate + H2O = a ribonucleoside + phosphate. Its function is as follows. Nucleotidase that shows phosphatase activity on nucleoside 5'-monophosphates. This Synechococcus sp. (strain WH7803) protein is 5'-nucleotidase SurE.